We begin with the raw amino-acid sequence, 729 residues long: MLYKGDTLYLDWLEDGIAELVFDAPGSVNKLDTATVASLGEAIGVLEQQSDLKGLLLRSNKAAFIVGADITEFLSLFLVPEEQLSQWLHFANSVFNRLEDLPVPTIAAVNGYALGGGCECVLATDYRLATPDLRIGLPETKLGIMPGFGGSVRMPRMLGADSALEIIAAGKDVGADQALKIGLVDGVVKAEKLIEGAMAILRQAINGDLDWKAKRQPKLEPLKLSKIEATMSFTIAKGMVAQTAGKHYPAPITAVKTIEAAARFGREEALNLENKSFVPLAHTNEARALVGIFLNDQYVKGKAKKLTKDVETPKQAAVLGAGIMGGGIAYQSAWKGVPVIMKDINDKSLALGMTEAAKLLNKQLERGKIDGLKLAGVISTIHPTLDYAGFERVDVVVEAIVENPKVKKAVLAETEQKVRPDTVLASNTSTIPISELANALERPENFCGMHFFNPVHRMPLVEIIRGEKSSDETIAKVVAWASKMGKTPIVVNDCPGFFVNRVLFPYFAGFSQLLRDGADFRKIDKVMEKQFGWPMGPAYLLDVVGIDTAHHAQAVMAAGFPQRMQKDYRDAIDALFDANRFGQKNGLGFWHYKEDSKGKPKKEEDAAVDDLLAEVSQPKRDFSEEEIIARMMIPMVNEVVRCLEEGIIATPAEADMALVYGLGFPPFHGGAFRWLDTLGSAKYLDMAQQYQHLGPLYEVPEGLRNKARHNEPYYPPVEPARPVGDLKTA.

The enoyl-CoA hydratase/isomerase stretch occupies residues 1-189 (MLYKGDTLYL…KIGLVDGVVK (189 aa)). Position 296 (aspartate 296) interacts with substrate. The 3-hydroxyacyl-CoA dehydrogenase stretch occupies residues 311–729 (ETPKQAAVLG…ARPVGDLKTA (419 aa)). Residues methionine 324, aspartate 343, 400-402 (IVE), lysine 407, and serine 429 each bind NAD(+). The active-site For 3-hydroxyacyl-CoA dehydrogenase activity is the histidine 450. NAD(+) is bound at residue asparagine 453. Substrate-binding residues include asparagine 500 and tyrosine 660. The disordered stretch occupies residues 708 to 729 (RHNEPYYPPVEPARPVGDLKTA).

The protein in the N-terminal section; belongs to the enoyl-CoA hydratase/isomerase family. It in the C-terminal section; belongs to the 3-hydroxyacyl-CoA dehydrogenase family. Heterotetramer of two alpha chains (FadB) and two beta chains (FadA).

The catalysed reaction is a (3S)-3-hydroxyacyl-CoA + NAD(+) = a 3-oxoacyl-CoA + NADH + H(+). It catalyses the reaction a (3S)-3-hydroxyacyl-CoA = a (2E)-enoyl-CoA + H2O. It carries out the reaction a 4-saturated-(3S)-3-hydroxyacyl-CoA = a (3E)-enoyl-CoA + H2O. The enzyme catalyses (3S)-3-hydroxybutanoyl-CoA = (3R)-3-hydroxybutanoyl-CoA. The catalysed reaction is a (3Z)-enoyl-CoA = a 4-saturated (2E)-enoyl-CoA. It catalyses the reaction a (3E)-enoyl-CoA = a 4-saturated (2E)-enoyl-CoA. The protein operates within lipid metabolism; fatty acid beta-oxidation. Functionally, involved in the aerobic and anaerobic degradation of long-chain fatty acids via beta-oxidation cycle. Catalyzes the formation of 3-oxoacyl-CoA from enoyl-CoA via L-3-hydroxyacyl-CoA. It can also use D-3-hydroxyacyl-CoA and cis-3-enoyl-CoA as substrate. The sequence is that of Fatty acid oxidation complex subunit alpha from Escherichia coli O157:H7.